The chain runs to 526 residues: Peptide chain release factor 3 (526 aa).

The region spanning 9–277 is the tr-type G domain; sequence DKRRTFAIIS…GIVEWAPRPQ (269 aa). Residues 18 to 25, 86 to 90, and 140 to 143 contribute to the GTP site; these read SHPDAGKT, DTPGH, and NKLD.

This sequence belongs to the TRAFAC class translation factor GTPase superfamily. Classic translation factor GTPase family. PrfC subfamily.

It localises to the cytoplasm. Functionally, increases the formation of ribosomal termination complexes and stimulates activities of RF-1 and RF-2. It binds guanine nucleotides and has strong preference for UGA stop codons. It may interact directly with the ribosome. The stimulation of RF-1 and RF-2 is significantly reduced by GTP and GDP, but not by GMP. The sequence is that of Peptide chain release factor 3 from Shewanella loihica (strain ATCC BAA-1088 / PV-4).